A 182-amino-acid chain; its full sequence is ATP synthase subunit delta (182 aa).

This sequence belongs to the ATPase delta chain family. As to quaternary structure, F-type ATPases have 2 components, F(1) - the catalytic core - and F(0) - the membrane proton channel. F(1) has five subunits: alpha(3), beta(3), gamma(1), delta(1), epsilon(1). CF(0) has four main subunits: a(1), b(1), b'(1) and c(10-14). The alpha and beta chains form an alternating ring which encloses part of the gamma chain. F(1) is attached to F(0) by a central stalk formed by the gamma and epsilon chains, while a peripheral stalk is formed by the delta, b and b' chains.

The protein localises to the cellular thylakoid membrane. Functionally, f(1)F(0) ATP synthase produces ATP from ADP in the presence of a proton or sodium gradient. F-type ATPases consist of two structural domains, F(1) containing the extramembraneous catalytic core and F(0) containing the membrane proton channel, linked together by a central stalk and a peripheral stalk. During catalysis, ATP synthesis in the catalytic domain of F(1) is coupled via a rotary mechanism of the central stalk subunits to proton translocation. In terms of biological role, this protein is part of the stalk that links CF(0) to CF(1). It either transmits conformational changes from CF(0) to CF(1) or is implicated in proton conduction. In Synechococcus sp. (strain CC9605), this protein is ATP synthase subunit delta.